The primary structure comprises 405 residues: Acetate kinase (405 aa).

A Mg(2+)-binding site is contributed by N7. Position 14 (K14) interacts with ATP. Position 92 (R92) interacts with substrate. D149 functions as the Proton donor/acceptor in the catalytic mechanism. Residues H209–G213 and D284–R286 each bind ATP. E389 contributes to the Mg(2+) binding site.

The protein belongs to the acetokinase family. Homodimer. Mg(2+) serves as cofactor. Requires Mn(2+) as cofactor.

It is found in the cytoplasm. The enzyme catalyses acetate + ATP = acetyl phosphate + ADP. Its pathway is metabolic intermediate biosynthesis; acetyl-CoA biosynthesis; acetyl-CoA from acetate: step 1/2. Functionally, catalyzes the formation of acetyl phosphate from acetate and ATP. Can also catalyze the reverse reaction. The protein is Acetate kinase of Borreliella burgdorferi (strain ZS7) (Borrelia burgdorferi).